Reading from the N-terminus, the 321-residue chain is Degreening-related gene dee76 protein (321 aa).

Belongs to the Mo25 family.

This Auxenochlorella protothecoides (Green microalga) protein is Degreening-related gene dee76 protein (DEE76).